The primary structure comprises 479 residues: Bifunctional AAC/APH (479 aa).

In terms of domain architecture, N-acetyltransferase spans 8-180 (ICIRTLIDDD…DCYLMEYRYD (173 aa)). The tract at residues 110-153 (KGIGTRYIKLIFEFLKKERNANAVILDPHKNNPRAIRAYQKSGF) is acetyl-CoA binding site. The active-site Proton acceptor; for phosphotransferase activity is the D374. D393 contributes to the a gentamycin binding site.

It in the C-terminal section; belongs to the aminoglycoside phosphotransferase family.

It localises to the cytoplasm. The catalysed reaction is a gentamycin + GTP = a gentamycin 2''-phosphate + GDP + H(+). Involved in resistance to gentamicin, tobramycin, and kanamycin. Tobramycin and kanamycin resistance is due to the ACC activity, specified by N-terminal region. The C-terminal region is a kinase that phosphorylates several 4,6-disubstituted aminoglycosides. The sequence is that of Bifunctional AAC/APH (aacA-aphD) from Enterococcus faecalis (strain ATCC 700802 / V583).